We begin with the raw amino-acid sequence, 935 residues long: C-1-tetrahydrofolate synthase, cytoplasmic (935 aa).

Met-1 is subject to N-acetylmethionine. The interval 2–291 (APAEILNGKE…MLMQSTVESA (290 aa)) is methylenetetrahydrofolate dehydrogenase and methenyltetrahydrofolate cyclohydrolase (D/C) domain. Residues 52 to 56 (YINVK) and 99 to 101 (VQL) contribute to the substrate site. Lys-56 is an active-site residue. Residues 172–174 (GRS) and Ser-197 each bind NADP(+). 272–276 (PGGVG) lines the substrate pocket. Residues 310 to 935 (LNLKTPVPSD…PETEQVNGLF (626 aa)) are formyltetrahydrofolate synthetase domain. Ser-318 carries the phosphoserine modification. 380-387 (TPLGEGKS) serves as a coordination point for ATP. 2 positions are modified to phosphoserine: Ser-413 and Ser-490.

In the N-terminal section; belongs to the tetrahydrofolate dehydrogenase/cyclohydrolase family. This sequence in the C-terminal section; belongs to the formate--tetrahydrofolate ligase family. Homodimer. Ubiquitous.

It is found in the cytoplasm. The catalysed reaction is (6R)-5,10-methylene-5,6,7,8-tetrahydrofolate + NADP(+) = (6R)-5,10-methenyltetrahydrofolate + NADPH. The enzyme catalyses (6R)-5,10-methenyltetrahydrofolate + H2O = (6R)-10-formyltetrahydrofolate + H(+). It catalyses the reaction (6S)-5,6,7,8-tetrahydrofolate + formate + ATP = (6R)-10-formyltetrahydrofolate + ADP + phosphate. Its pathway is one-carbon metabolism; tetrahydrofolate interconversion. Functionally, trifunctional enzyme that catalyzes the interconversion of three forms of one-carbon-substituted tetrahydrofolate: (6R)-5,10-methylene-5,6,7,8-tetrahydrofolate, 5,10-methenyltetrahydrofolate and (6S)-10-formyltetrahydrofolate. These derivatives of tetrahydrofolate are differentially required in nucleotide and amino acid biosynthesis, (6S)-10-formyltetrahydrofolate being required for purine biosynthesis while (6R)-5,10-methylene-5,6,7,8-tetrahydrofolate is used for serine and methionine biosynthesis for instance. This Homo sapiens (Human) protein is C-1-tetrahydrofolate synthase, cytoplasmic (MTHFD1).